The primary structure comprises 492 residues: UDP-N-acetylmuramyl-tripeptide synthetase 2 (492 aa).

Ser-30 contributes to the UDP-N-acetyl-alpha-D-muramoyl-L-alanyl-D-glutamate binding site. 111 to 117 (GTNGKTT) contacts ATP. UDP-N-acetyl-alpha-D-muramoyl-L-alanyl-D-glutamate contacts are provided by residues 154 to 155 (TT), Ser-181, Gln-187, and Arg-189. Position 221 is an N6-carboxylysine (Lys-221).

It belongs to the MurCDEF family. MurE subfamily. Carboxylation is probably crucial for Mg(2+) binding and, consequently, for the gamma-phosphate positioning of ATP.

It localises to the cytoplasm. It participates in cell wall biogenesis; peptidoglycan biosynthesis. Its function is as follows. Catalyzes the addition of an amino acid to the nucleotide precursor UDP-N-acetylmuramoyl-L-alanyl-D-glutamate (UMAG) in the biosynthesis of bacterial cell-wall peptidoglycan. In Oceanobacillus iheyensis (strain DSM 14371 / CIP 107618 / JCM 11309 / KCTC 3954 / HTE831), this protein is UDP-N-acetylmuramyl-tripeptide synthetase 2.